The following is a 126-amino-acid chain: Fluoride-specific ion channel FluC (126 aa).

Transmembrane regions (helical) follow at residues 2-22 (LTFAPLNFLAIGVGATLGAWL), 37-57 (WGTLTANLVGGYLIGVMVALI), 65-85 (AWIRLAAVTGFLGGLTTFSTF), and 101-121 (AAAYAGASLAGSLAMTGLATV). The Na(+) site is built by Gly77 and Thr80.

This sequence belongs to the fluoride channel Fluc/FEX (TC 1.A.43) family.

It localises to the cell inner membrane. The catalysed reaction is fluoride(in) = fluoride(out). Na(+) is not transported, but it plays an essential structural role and its presence is essential for fluoride channel function. Its function is as follows. Fluoride-specific ion channel. Important for reducing fluoride concentration in the cell, thus reducing its toxicity. This Bordetella parapertussis (strain 12822 / ATCC BAA-587 / NCTC 13253) protein is Fluoride-specific ion channel FluC.